We begin with the raw amino-acid sequence, 689 residues long: Glycine--tRNA ligase beta subunit (689 aa).

The protein belongs to the class-II aminoacyl-tRNA synthetase family. In terms of assembly, tetramer of two alpha and two beta subunits.

It is found in the cytoplasm. The enzyme catalyses tRNA(Gly) + glycine + ATP = glycyl-tRNA(Gly) + AMP + diphosphate. The sequence is that of Glycine--tRNA ligase beta subunit from Actinobacillus pleuropneumoniae serotype 3 (strain JL03).